The chain runs to 142 residues: 3-hydroxyacyl-[acyl-carrier-protein] dehydratase FabZ (142 aa).

Residue H47 is part of the active site.

Belongs to the thioester dehydratase family. FabZ subfamily.

The protein localises to the cytoplasm. The catalysed reaction is a (3R)-hydroxyacyl-[ACP] = a (2E)-enoyl-[ACP] + H2O. Involved in unsaturated fatty acids biosynthesis. Catalyzes the dehydration of short chain beta-hydroxyacyl-ACPs and long chain saturated and unsaturated beta-hydroxyacyl-ACPs. The polypeptide is 3-hydroxyacyl-[acyl-carrier-protein] dehydratase FabZ (Thermoanaerobacter sp. (strain X514)).